A 75-amino-acid chain; its full sequence is DNA-directed RNA polymerase subunit omega (75 aa).

Belongs to the RNA polymerase subunit omega family. In cyanobacteria the RNAP catalytic core is composed of 2 alpha, 1 beta, 1 beta', 1 gamma and 1 omega subunit. When a sigma factor is associated with the core the holoenzyme is formed, which can initiate transcription.

The enzyme catalyses RNA(n) + a ribonucleoside 5'-triphosphate = RNA(n+1) + diphosphate. In terms of biological role, promotes RNA polymerase assembly. Latches the N- and C-terminal regions of the beta' subunit thereby facilitating its interaction with the beta and alpha subunits. The chain is DNA-directed RNA polymerase subunit omega from Synechococcus sp. (strain CC9605).